A 519-amino-acid polypeptide reads, in one-letter code: Cytosol aminopeptidase (519 aa).

Lysine 45 is modified (N6-succinyllysine). Residue serine 54 is modified to Phosphoserine. Lysine 61 and lysine 103 each carry N6-succinyllysine. A phosphoserine mark is found at serine 180 and serine 194. Zn(2+)-binding residues include leucine 202 and methionine 203. Lysine 221 bears the N6-acetyllysine; alternate mark. The residue at position 221 (lysine 221) is an N6-succinyllysine; alternate. Serine 238 carries the phosphoserine modification. Zn(2+) is bound by residues lysine 282 and aspartate 287. 4 residues coordinate substrate: lysine 282, aspartate 287, serine 292, and lysine 294. Aspartate 287 provides a ligand contact to Mg(2+). Residue lysine 294 is part of the active site. Residues arginine 303, aspartate 305, aspartate 364, and glutamate 366 each coordinate Zn(2+). 2 residues coordinate substrate: aspartate 305 and aspartate 364. Mg(2+)-binding residues include aspartate 364 and glutamate 366. Arginine 368 is an active-site residue. An N6-acetyllysine; alternate modification is found at lysine 455. Lysine 455 bears the N6-succinyllysine; alternate mark. Lysine 476 carries the N6-succinyllysine modification. N6-acetyllysine; alternate is present on lysine 489. An N6-succinyllysine; alternate modification is found at lysine 489.

This sequence belongs to the peptidase M17 family. As to quaternary structure, homohexamer. It depends on Zn(2+) as a cofactor. Mn(2+) is required as a cofactor.

The protein resides in the cytoplasm. It catalyses the reaction Release of an N-terminal amino acid, Xaa-|-Yaa-, in which Xaa is preferably Leu, but may be other amino acids including Pro although not Arg or Lys, and Yaa may be Pro. Amino acid amides and methyl esters are also readily hydrolyzed, but rates on arylamides are exceedingly low.. The catalysed reaction is an S-substituted L-cysteinylglycine + H2O = an S-substituted L-cysteine + glycine. The enzyme catalyses L-cysteinylglycine + H2O = L-cysteine + glycine. It carries out the reaction S-benzyl-L-cysteinylglycine + H2O = S-benzyl-L-cysteine + glycine. It catalyses the reaction Release of N-terminal proline from a peptide.. Its function is as follows. Cytosolic metallopeptidase that catalyzes the removal of unsubstituted N-terminal hydrophobic amino acids from various peptides. The presence of Zn(2+) ions is essential for the peptidase activity, and the association with other cofactors can modulate the substrate spectificity of the enzyme. For instance, in the presence of Mn(2+), it displays a specific Cys-Gly hydrolyzing activity of Cys-Gly-S-conjugates. Involved in the metabolism of glutathione and in the degradation of glutathione S-conjugates, which may play a role in the control of the cell redox status. In Mus musculus (Mouse), this protein is Cytosol aminopeptidase.